The primary structure comprises 384 residues: Aryl-hydrocarbon-interacting protein-like 1 (384 aa).

A PPIase FKBP-type domain is found at 53-145 (RQVGQPMHII…DLDELQKEPQ (93 aa)). TPR repeat units follow at residues 178-211 (VPVLHGEGNRLFKLGRYEEASSKYQEAIICLRNL), 230-263 (NTLILNYCQCLLKKEEYYEVLEHTSDILRHHPGI), and 264-297 (VKAYYVRARAHAEVWNEAEAKADLRKVLELEPSM). The tract at residues 328 to 384 (SQGATQPPAEPPTEPPAQSSTEPPAEPPPAPSAELSAGPPAETATEPPPSPGHSLQH) is disordered. The segment covering 359 to 372 (SAELSAGPPAETAT) has biased composition (low complexity).

In terms of assembly, interacts with NUB1.

The protein resides in the cytoplasm. It localises to the nucleus. Its function is as follows. May be important in protein trafficking and/or protein folding and stabilization. This chain is Aryl-hydrocarbon-interacting protein-like 1 (AIPL1), found in Pan paniscus (Pygmy chimpanzee).